The primary structure comprises 149 residues: Calmodulin (149 aa).

At Ala2 the chain carries N-acetylalanine. EF-hand domains follow at residues 8–43 (EQIAEFKEAFSLFDKDGDGTITTKELGTVMRSLGQN), 44–79 (PTEAELLVMINEVDADGNGTIDFPEFLTMMARKMKD), 81–116 (DSEEEIKEAFKVFDKDGNGYISAAELRHVMTNLGEK), and 117–149 (LSEDEVEEMIREADVDGDGQINYEEFVKMMMSK). Residues Asp21, Asp23, Asp25, Thr27, Glu32, Asp57, Asp59, Asn61, Thr63, Glu68, Asp94, Asp96, Asn98, Tyr100, Glu105, Asp130, Asp132, Asp134, Gln136, and Glu141 each coordinate Ca(2+).

Belongs to the calmodulin family.

In terms of biological role, calmodulin mediates the control of a large number of enzymes, ion channels and other proteins by Ca(2+). Among the enzymes to be stimulated by the calmodulin-Ca(2+) complex are a number of protein kinases and phosphatases. This is Calmodulin (CMD1) from Blastocladiella emersonii (Aquatic fungus).